The sequence spans 625 residues: Interferon-induced GTP-binding protein Mx2 (625 aa).

Positions 29–302 (DLALPAIAVI…LVFHIGRCLP (274 aa)) constitute a Dynamin-type G domain. A G1 motif region spans residues 39–46 (GDQSSGKS). 39 to 46 (GDQSSGKS) is a binding site for GTP. Positions 64-66 (VTR) are G2 motif. A G3 motif region spans residues 140–143 (DLPG). GTP is bound by residues 140-144 (DLPGI) and 209-212 (TKPD). The G4 motif stretch occupies residues 209–212 (TKPD). Residues 241–244 (RCRG) are G5 motif. In terms of domain architecture, GED spans 539–625 (REELTCHLKS…TEALKYLAKF (87 aa)).

This sequence belongs to the TRAFAC class dynamin-like GTPase superfamily. Dynamin/Fzo/YdjA family.

It is found in the cytoplasm. The polypeptide is Interferon-induced GTP-binding protein Mx2 (mx2) (Ictalurus punctatus (Channel catfish)).